The following is a 63-amino-acid chain: Translational regulator CsrA (63 aa).

Belongs to the CsrA/RsmA family. As to quaternary structure, homodimer; the beta-strands of each monomer intercalate to form a hydrophobic core, while the alpha-helices form wings that extend away from the core.

The protein localises to the cytoplasm. A key translational regulator that binds mRNA to regulate translation initiation and/or mRNA stability. Mediates global changes in gene expression, shifting from rapid growth to stress survival by linking envelope stress, the stringent response and the catabolite repression systems. Usually binds in the 5'-UTR; binding at or near the Shine-Dalgarno sequence prevents ribosome-binding, repressing translation, binding elsewhere in the 5'-UTR can activate translation and/or stabilize the mRNA. Its function is antagonized by small RNA(s). The sequence is that of Translational regulator CsrA from Haemophilus influenzae (strain PittEE).